The primary structure comprises 230 residues: Somatolactin (230 aa).

The signal sequence occupies residues 1–23; that stretch reads MMTAVKQSGVWAVLLWPYLLAVS. Cystine bridges form between Cys28-Cys38, Cys88-Cys204, and Cys221-Cys229. N-linked (GlcNAc...) asparagine glycosylation is found at Asn34 and Asn144.

This sequence belongs to the somatotropin/prolactin family. As to expression, pituitary gland.

Its subcellular location is the secreted. The chain is Somatolactin from Solea senegalensis (Senegalese sole).